A 199-amino-acid chain; its full sequence is MGPDFEIERELGGLVAGVDEVGRGPWAGPVTACAVVLDPMQVPDGLNDSKKLSEARRDALAMQILRVADVSLGWASVEEIDALNIRQATFLAMRRAMDGLTTPPTHALIDGNAIPPGLSCPATCVVKGDGRSVSIAAASIVAKVRRDALMKELAVMHPGYGWETNMGYGTAKHAAGLHHLGVTQYHRRSFAPIAKILCG.

The RNase H type-2 domain maps to 13–199 (GLVAGVDEVG…FAPIAKILCG (187 aa)). A divalent metal cation contacts are provided by D19, E20, and D110.

Belongs to the RNase HII family. Mn(2+) serves as cofactor. Mg(2+) is required as a cofactor.

It is found in the cytoplasm. It carries out the reaction Endonucleolytic cleavage to 5'-phosphomonoester.. In terms of biological role, endonuclease that specifically degrades the RNA of RNA-DNA hybrids. This chain is Ribonuclease HII, found in Jannaschia sp. (strain CCS1).